A 158-amino-acid chain; its full sequence is Protein OPG060 (158 aa).

This sequence belongs to the orthopoxvirus OPG058 family.

This chain is Protein OPG060 (OPG060), found in Cynomys gunnisoni (Gunnison's prairie dog).